Consider the following 561-residue polypeptide: Putative transport protein CKO_02260 (561 aa).

The next 5 membrane-spanning stretches (helical) occupy residues 8-28, 32-52, 66-86, 94-114, and 158-178; these read LLNGNYILLLFVVLALGLCLG, LGSVQLGNSIGVLVVSLLLGQ, FMLFIFCVGVEAGPNFFSIFF, MLALVMVGSALLIALGLGKLF, and NLSLGYALTYLIGLVSLIVGA. 2 RCK C-terminal domains span residues 200–288 and 292–373; these read RGLD…SFRN and VFDR…RIGF. A run of 5 helical transmembrane segments spans residues 383-403, 406-426, 447-467, 475-495, and 540-560; these read LLAFCAFFIIGLMIGMITFQF, FSFGIGNAAGLLFAGIMLGFL, FGLMVFMAGVGLSAGSGIGNG, MLIAGLVVSLVPVIICFLFGA, and AIANVLLTLAGTLIVIIWPGL.

This sequence belongs to the AAE transporter (TC 2.A.81) family. YbjL subfamily.

The protein localises to the cell membrane. This is Putative transport protein CKO_02260 from Citrobacter koseri (strain ATCC BAA-895 / CDC 4225-83 / SGSC4696).